Consider the following 91-residue polypeptide: Small ribosomal subunit protein uS15 (91 aa).

This sequence belongs to the universal ribosomal protein uS15 family. As to quaternary structure, part of the 30S ribosomal subunit. Forms a bridge to the 50S subunit in the 70S ribosome, contacting the 23S rRNA.

In terms of biological role, one of the primary rRNA binding proteins, it binds directly to 16S rRNA where it helps nucleate assembly of the platform of the 30S subunit by binding and bridging several RNA helices of the 16S rRNA. Functionally, forms an intersubunit bridge (bridge B4) with the 23S rRNA of the 50S subunit in the ribosome. This is Small ribosomal subunit protein uS15 from Deinococcus radiodurans (strain ATCC 13939 / DSM 20539 / JCM 16871 / CCUG 27074 / LMG 4051 / NBRC 15346 / NCIMB 9279 / VKM B-1422 / R1).